Consider the following 140-residue polypeptide: MAKKVVTNIKLQVPAGQANPSPPIGPALGQHGVNIMEFCKAFNARTQGQEGMIIPVVITVYADRSFTFITKTPPAAVLLKKTAQIAKGSNEPNRTKVAKVTRAQVEEIAKLKMPDLNARDLDAAVLTIMGTARSMGIEVE.

The protein belongs to the universal ribosomal protein uL11 family. In terms of assembly, part of the ribosomal stalk of the 50S ribosomal subunit. Interacts with L10 and the large rRNA to form the base of the stalk. L10 forms an elongated spine to which L12 dimers bind in a sequential fashion forming a multimeric L10(L12)X complex. One or more lysine residues are methylated.

Forms part of the ribosomal stalk which helps the ribosome interact with GTP-bound translation factors. In Syntrophobacter fumaroxidans (strain DSM 10017 / MPOB), this protein is Large ribosomal subunit protein uL11.